The primary structure comprises 430 residues: KIN17-like protein (430 aa).

Residues 28-50 (CQMCQKQCRDENGFKCHCMSESH) form a C2H2-type zinc finger. The interval 51-160 (QRQMQVFGQA…KARLKRKRIK (110 aa)) is winged helix-turn-helix (wHTH). Residues 147-183 (EQAVKARLKRKRIKSDLAEDERQERMIARQIERAQQS) are a coiled coil. The Nuclear localization signal (NLS) motif lies at 155-158 (KRKR). 2 disordered regions span residues 179–230 (RAQQ…ANKA) and 261–284 (EEEDEVSARDKEKEELAKKKGKDA). Over residues 191-224 (LGDDASPDGSEGESGSEDEYSDSENDHEGQEEDA) the composition is skewed to acidic residues. A compositionally biased stretch (basic and acidic residues) spans 261-278 (EEEDEVSARDKEKEELAK). The stretch at 283–312 (DAINAAEARRSALDELMKEEEKAKERSNRK) forms a coiled coil. The segment at 319-370 (GIVVKVMSKSLAEKGYCKQKGVVKRVIDKYVGEIEMLESKHVLRVDQDELET) is C-terminal subdomain A. The interval 376–427 (GGLVRIVNGAYRGSNARLLSVDTERFCAKVQVEKGLYDGKVLKAIEYEDICK) is C-terminal subdomain B.

Belongs to the KIN17 family.

Its subcellular location is the nucleus. In Oryza sativa subsp. japonica (Rice), this protein is KIN17-like protein.